The primary structure comprises 553 residues: MHALLRRVTRGNGFYIGDLFHAAAGHDATTPVTLDQPLQYAPELGTRFTVGQLAEQTDELAARLWAAGVRPTERVALYKKDNFDIALHACAAARIGAVPALLSPALEAPVVRTLLDRLDGPWLLTDATTLAGPLGTVLAPASVRAVLLTTGTPAEGALPAAGATGPAREGDAPPPAPVVRLADHRGAPKRPPVFLHPRQPSLITHSSGTTGVPKLAVHCPEAGWHRLVPQKVVSWPIRGKEKAALCMTFVHSRFYQGLAMFLSHGNPMLIAVDPDPSRIGPLFARERPGYIETHPNTYVDWEALADAPGEPLAGVRVFGATFDAMHPRTIQRMLGASRRTRPLFVQFYGQSEIGPMAGRWYTRRSAARMNGRCVGLPLPGFISLRVVDDAGKRLRGGRTGHLEVRSRTRILTYLGEDQRYAEQLHDGWWRVGDMGRRDRWGLLHLLDREVDRIGDLESSLAVEDLLMSRLEELREVVLVPGADGEPVPVVATVDESPLDAARWQRATSDLPTMAPVRQFRFEDLPRTSTRKIQKPELARLIQGVRATDQGVGA.

Over residues 157-167 (ALPAAGATGPA) the composition is skewed to low complexity. The segment at 157-178 (ALPAAGATGPAREGDAPPPAPV) is disordered.

Belongs to the ATP-dependent AMP-binding enzyme family.

It carries out the reaction 3-amino-2-hydroxy-4-methoxybenzoate + nitrite + ATP = cremeomycin + AMP + diphosphate + H2O. The protein operates within antibiotic biosynthesis. Its function is as follows. Part of a gene cluster involved in the biosynthesis of cremeomycin, a light-sensitive o-diazoquinone with antibacterial and antiproliferative effects. Catalyzes the last step of cremeomycin biosynthesis, the diazotization of 3-amino-2-hydroxy-4-methoxybenzoate (3,2,4-AHMBA) with nitrite to generate cremeomycin. The sequence is that of 3-amino-2-hydroxy-4-methoxybenzoate diazotase from Streptomyces cremeus.